The chain runs to 188 residues: Cytochrome b-245 chaperone 1 homolog (188 aa).

Residues 20–42 (SIRSWSLLVGILSVGLAAAYYST) traverse the membrane as a helical segment.

It belongs to the CYBC1 family.

It localises to the endoplasmic reticulum membrane. Its function is as follows. Functions as a chaperone necessary for a stable expression of the CYBA and CYBB subunits of the cytochrome b-245 heterodimer. The polypeptide is Cytochrome b-245 chaperone 1 homolog (cybc1) (Xenopus laevis (African clawed frog)).